The following is a 324-amino-acid chain: Galactosylgalactosylxylosylprotein 3-beta-glucuronosyltransferase 2 (324 aa).

Residues Met1 to Lys2 lie on the Cytoplasmic side of the membrane. The helical; Signal-anchor for type II membrane protein transmembrane segment at Ser3–Leu23 threads the bilayer. At Asp24–Val324 the chain is on the lumenal side. The segment at Ser50 to Pro78 is disordered. Asn68 carries N-linked (GlcNAc...) asparagine glycosylation. UDP-alpha-D-glucuronate-binding positions include Pro88–Tyr90, Asp119, Arg156, Arg161, and Asp186–Asp188. Residue Asp188 coordinates Mn(2+). Residues Trp235–Asp244 form an interaction with galactose moiety of substrate glycoprotein region. Glu274 acts as the Proton donor/acceptor in catalysis. Asn293 is a glycosylation site (N-linked (GlcNAc...) asparagine). His301 to Arg303 is a UDP-alpha-D-glucuronate binding site.

It belongs to the glycosyltransferase 43 family. Homodimer. Requires Mn(2+) as cofactor. As to expression, expressed in brain, but not in liver and kidney.

The protein resides in the golgi apparatus membrane. It carries out the reaction 3-O-(beta-D-galactosyl-(1-&gt;3)-beta-D-galactosyl-(1-&gt;4)-beta-D-xylosyl)-L-seryl-[protein] + UDP-alpha-D-glucuronate = 3-O-(beta-D-GlcA-(1-&gt;3)-beta-D-Gal-(1-&gt;3)-beta-D-Gal-(1-&gt;4)-beta-D-Xyl)-L-seryl-[protein] + UDP + H(+). The protein operates within protein modification; protein glycosylation. In terms of biological role, involved in the biosynthesis of L2/HNK-1 carbohydrate epitope on both glycolipids and glycoproteins. In Mus musculus (Mouse), this protein is Galactosylgalactosylxylosylprotein 3-beta-glucuronosyltransferase 2 (B3gat2).